The primary structure comprises 555 residues: Glutamine--tRNA ligase (555 aa).

A 'HIGH' region motif is present at residues 35–45; sequence PEPNGYLHIGH. ATP contacts are provided by residues 36-38 and 42-48; these read EPN and HIGHAKS. The L-glutamine site is built by Asp-68 and Tyr-213. Residues Thr-232 and 262–263 each bind ATP; that span reads RL. A 'KMSKS' region motif is present at residues 269 to 273; it reads ITSKR.

This sequence belongs to the class-I aminoacyl-tRNA synthetase family. As to quaternary structure, monomer.

Its subcellular location is the cytoplasm. The catalysed reaction is tRNA(Gln) + L-glutamine + ATP = L-glutaminyl-tRNA(Gln) + AMP + diphosphate. The protein is Glutamine--tRNA ligase of Azotobacter vinelandii (strain DJ / ATCC BAA-1303).